A 642-amino-acid chain; its full sequence is Threonine--tRNA ligase (642 aa).

The TGS domain maps to 1 to 61 (MPVITLPDGS…ETDAELSIIT (61 aa)). The tract at residues 243–534 (DHRKIGKQLD…LIEEYAGRFP (292 aa)) is catalytic. C334, H385, and H511 together coordinate Zn(2+).

Belongs to the class-II aminoacyl-tRNA synthetase family. As to quaternary structure, homodimer. Requires Zn(2+) as cofactor.

The protein localises to the cytoplasm. It catalyses the reaction tRNA(Thr) + L-threonine + ATP = L-threonyl-tRNA(Thr) + AMP + diphosphate + H(+). Catalyzes the attachment of threonine to tRNA(Thr) in a two-step reaction: L-threonine is first activated by ATP to form Thr-AMP and then transferred to the acceptor end of tRNA(Thr). Also edits incorrectly charged L-seryl-tRNA(Thr). The sequence is that of Threonine--tRNA ligase from Shewanella putrefaciens (strain CN-32 / ATCC BAA-453).